Here is a 476-residue protein sequence, read N- to C-terminus: Protein DETOXIFICATION 3 (476 aa).

12 helical membrane passes run A35–V55, G66–A86, I117–L137, V146–P166, L185–G205, G208–V228, A260–L280, V289–A309, V331–T351, V370–L390, I402–L422, and L433–A453.

It belongs to the multi antimicrobial extrusion (MATE) (TC 2.A.66.1) family.

It localises to the membrane. This Arabidopsis thaliana (Mouse-ear cress) protein is Protein DETOXIFICATION 3.